Consider the following 405-residue polypeptide: Dihydrolipoyllysine-residue succinyltransferase component of 2-oxoglutarate dehydrogenase complex (405 aa).

Positions 3 to 78 constitute a Lipoyl-binding domain; that stretch reads SVDILVPDLP…TSRQILGRLR (76 aa). N6-lipoyllysine is present on K44. The disordered stretch occupies residues 75–111; it reads GRLREGNSAGKETSAKSEEKASTPAQRQQASLEEQNN. Polar residues predominate over residues 97–111; that stretch reads TPAQRQQASLEEQNN. In terms of domain architecture, Peripheral subunit-binding (PSBD) spans 113–150; it reads ALSPAIRRLLAEHNLDASAIKGTGVGGRLTREDVEKHL. Residue K148 is modified to N6-acetyllysine. Positions 153 to 173 are enriched in low complexity; sequence APAKESAPAAAAPAAQPALAA. The segment at 153–178 is disordered; it reads APAKESAPAAAAPAAQPALAARSEKR. Catalysis depends on residues H376 and D380.

The protein belongs to the 2-oxoacid dehydrogenase family. In terms of assembly, forms a 24-polypeptide structural core with octahedral symmetry. Part of the 2-oxoglutarate dehydrogenase (OGDH) complex composed of E1 (2-oxoglutarate dehydrogenase), E2 (dihydrolipoamide succinyltransferase) and E3 (dihydrolipoamide dehydrogenase); the complex contains multiple copies of the three enzymatic components (E1, E2 and E3). Interacts with SucA (via N-terminus), the E1 component of OGDH complex. The cofactor is (R)-lipoate.

The catalysed reaction is N(6)-[(R)-dihydrolipoyl]-L-lysyl-[protein] + succinyl-CoA = N(6)-[(R)-S(8)-succinyldihydrolipoyl]-L-lysyl-[protein] + CoA. It functions in the pathway amino-acid degradation; L-lysine degradation via saccharopine pathway; glutaryl-CoA from L-lysine: step 6/6. E2 component of the 2-oxoglutarate dehydrogenase (OGDH) complex which catalyzes the second step in the conversion of 2-oxoglutarate to succinyl-CoA and CO(2). The sequence is that of Dihydrolipoyllysine-residue succinyltransferase component of 2-oxoglutarate dehydrogenase complex (sucB) from Escherichia coli O157:H7.